The primary structure comprises 260 residues: Deoxyribonuclease-1 (260 aa).

An N-linked (GlcNAc...) asparagine glycan is attached at Asn-18. The active site involves Glu-78. Cys-101 and Cys-104 are disulfide-bonded. His-134 is a catalytic residue. The cysteines at positions 173 and 209 are disulfide-linked.

Belongs to the DNase I family. Requires Ca(2+) as cofactor. Mg(2+) is required as a cofactor.

The protein resides in the secreted. It is found in the zymogen granule. It localises to the nucleus envelope. The enzyme catalyses Endonucleolytic cleavage to 5'-phosphodinucleotide and 5'-phosphooligonucleotide end-products.. Serum endocuclease secreted into body fluids by a wide variety of exocrine and endocrine organs. Expressed by non-hematopoietic tissues and preferentially cleaves protein-free DNA. Among other functions, seems to be involved in cell death by apoptosis. Binds specifically to G-actin and blocks actin polymerization. Together with DNASE1L3, plays a key role in degrading neutrophil extracellular traps (NETs). NETs are mainly composed of DNA fibers and are released by neutrophils to bind pathogens during inflammation. Degradation of intravascular NETs by DNASE1 and DNASE1L3 is required to prevent formation of clots that obstruct blood vessels and cause organ damage following inflammation. The sequence is that of Deoxyribonuclease-1 (DNASE1) from Ovis aries (Sheep).